A 144-amino-acid chain; its full sequence is Deoxyuridine 5'-triphosphate nucleotidohydrolase (144 aa).

Substrate-binding positions include 63-65 (RSG), asparagine 76, and 80-82 (TID).

The protein belongs to the dUTPase family. Mg(2+) serves as cofactor.

The enzyme catalyses dUTP + H2O = dUMP + diphosphate + H(+). It functions in the pathway pyrimidine metabolism; dUMP biosynthesis; dUMP from dCTP (dUTP route): step 2/2. Functionally, this enzyme is involved in nucleotide metabolism: it produces dUMP, the immediate precursor of thymidine nucleotides and it decreases the intracellular concentration of dUTP so that uracil cannot be incorporated into DNA. This chain is Deoxyuridine 5'-triphosphate nucleotidohydrolase, found in Porphyromonas gingivalis (strain ATCC BAA-308 / W83).